Reading from the N-terminus, the 712-residue chain is Glucans biosynthesis glucosyltransferase H (712 aa).

The next 6 membrane-spanning stretches (helical) occupy residues 57-77 (LAIMLATAALTCAGGYEMYQV), 89-109 (IVLALFAALFAWVALSFVSAL), 408-428 (GIGSYITAPMWLAFLVAGILI), 462-482 (FAGTMGLLMMPKLLALILVVI), 552-572 (YAAPSWLGAVMAVSALLVSWP), and 573-593 (LLLWMMPVILGLVLAIPVALL).

This sequence belongs to the glycosyltransferase 2 family. OpgH subfamily.

The protein resides in the cell inner membrane. It functions in the pathway glycan metabolism; osmoregulated periplasmic glucan (OPG) biosynthesis. Its function is as follows. Involved in the biosynthesis of osmoregulated periplasmic glucans (OPGs). The protein is Glucans biosynthesis glucosyltransferase H of Rhodopseudomonas palustris (strain BisA53).